A 1037-amino-acid polypeptide reads, in one-letter code: Tyrosine-protein kinase-like otk (1037 aa).

The signal sequence occupies residues 1 to 23; the sequence is MDMDVMMISMCILASTFMAPGWA. 5 Ig-like C2-type domains span residues 24–109, 110–199, 251–365, 368–464, and 469–559; these read STSG…REAS, PPAK…RVMS, PEDL…APLN, PGLL…VSIN, and PKFS…VQLV. At 24–582 the chain is on the extracellular side; that stretch reads STSGFLRVPQ…GGDGFLVTRA (559 aa). 5 disulfide bridges follow: C47-C96, C138-C188, C276-C354, C399-C448, and C491-C543. Residues N336, N418, N430, N445, N513, and N525 are each glycosylated (N-linked (GlcNAc...) asparagine). The helical transmembrane segment at 583 to 603 threads the bilayer; the sequence is VLITMTVALAYIVLVVGLMLW. The Cytoplasmic segment spans residues 604–1037; sequence CRYRRQARKA…SKAMQSVAEK (434 aa). 2 disordered regions span residues 623–683 and 720–777; these read AGGD…KSVY and SAQS…KEEE. Over residues 658–676 the composition is skewed to polar residues; that stretch reads KSNGDAQKSDDTACSQQSR. Position 681 is a phosphoserine (S681). Residues 693 to 1031 form the Protein kinase; inactive domain; that stretch reads LSELLQIGRG…QLGSALSKAM (339 aa). Residues 723-734 show a composition bias toward basic and acidic residues; sequence SDKDADTEKQHS. The span at 739-749 shows a compositional bias: gly residues; the sequence is GSGGSGSGSGS. Positions 768–777 are enriched in acidic residues; the sequence is DDIEEIKEEE.

It belongs to the protein kinase superfamily. Tyr protein kinase family. Insulin receptor subfamily. As to quaternary structure, interacts with plexA; component of a receptor complex that mediates the repulsive signaling in response to Semaphorin ligands.

It localises to the cell membrane. In terms of biological role, acts as a calcium-dependent, homophilic cell adhesion molecule that regulates neural recognition during the development of the nervous system. Component of the repulsive Plexin signaling response to regulate motor axon guidance at the embryonic stage. Also component of a receptor complex that is required in the adult visual system to innervate the lamina layer; specific targeting of R1-R6 axons. This is Tyrosine-protein kinase-like otk from Drosophila pseudoobscura pseudoobscura (Fruit fly).